The sequence spans 890 residues: Translation initiation factor IF-2 (890 aa).

Residues 50–304 form a disordered region; it reads LRQGSPEQEE…LQQEFERPTA (255 aa). 3 stretches are compositionally biased toward basic and acidic residues: residues 112-125, 136-147, and 217-262; these read KRSD…RKQE, RALEQEEAKREE, and ALKE…QEAK. The tr-type G domain maps to 390–559; the sequence is GRAPVVTVMG…VLQAELQELK (170 aa). Residues 399 to 406 form a G1 region; it reads GHVDHGKT. 399 to 406 lines the GTP pocket; the sequence is GHVDHGKT. The G2 stretch occupies residues 424 to 428; the sequence is GITQH. A G3 region spans residues 445–448; the sequence is DTPG. GTP-binding positions include 445–449 and 499–502; these read DTPGH and NKMD. Residues 499 to 502 are G4; the sequence is NKMD. Residues 535–537 are G5; the sequence is SAM.

It belongs to the TRAFAC class translation factor GTPase superfamily. Classic translation factor GTPase family. IF-2 subfamily.

It is found in the cytoplasm. Its function is as follows. One of the essential components for the initiation of protein synthesis. Protects formylmethionyl-tRNA from spontaneous hydrolysis and promotes its binding to the 30S ribosomal subunits. Also involved in the hydrolysis of GTP during the formation of the 70S ribosomal complex. The chain is Translation initiation factor IF-2 from Halorhodospira halophila (strain DSM 244 / SL1) (Ectothiorhodospira halophila (strain DSM 244 / SL1)).